The primary structure comprises 1028 residues: Sporulation-specific protein 3 (1028 aa).

Its subcellular location is the prospore membrane. Its function is as follows. Has a role in spore morphogenesis. Involved in the assembly of the forespore membrane. The chain is Sporulation-specific protein 3 (spo3) from Schizosaccharomyces pombe (strain 972 / ATCC 24843) (Fission yeast).